The following is a 141-amino-acid chain: MSIVIGADAAGLRLKEVVKDFLEKENFHLVDVTAEGQDFVDVTLAVAAEVNKEEQNLGIVIDAYGAGPFIVATKIKGMVAAEVSDERSAYMTRGHNNSRMITMGAQLVGDELAKNIAKGFVNGKYDGGRHQIRVDMLNKMG.

The protein belongs to the LacAB/RpiB family. As to quaternary structure, heteromultimeric protein consisting of LacA and LacB.

The enzyme catalyses aldehydo-D-galactose 6-phosphate = keto-D-tagatose 6-phosphate. The protein operates within carbohydrate metabolism; D-galactose 6-phosphate degradation; D-tagatose 6-phosphate from D-galactose 6-phosphate: step 1/1. The polypeptide is Galactose-6-phosphate isomerase subunit LacA (Streptococcus pneumoniae serotype 4 (strain ATCC BAA-334 / TIGR4)).